A 161-amino-acid chain; its full sequence is MPSFDVVCEANMVEVKNAVEQANKEISTRFDFKGSDARVEHKENELTAFADDDFKLSQVKDVLINKMAKRNVDVRFLDYGKIDKISGDKVKQVISIKKGVTGDLSKKIVRIIKDSKIKVQASIQGDAVRVSGAKRDDLQSVMAMLRKDVSEAPLDFNNFRD.

It belongs to the YajQ family.

Functionally, nucleotide-binding protein. The protein is Nucleotide-binding protein H16_A3060 of Cupriavidus necator (strain ATCC 17699 / DSM 428 / KCTC 22496 / NCIMB 10442 / H16 / Stanier 337) (Ralstonia eutropha).